The sequence spans 252 residues: Serine/threonine phosphatase stp (252 aa).

The disordered stretch occupies residues 1–22; it reads MHAEFRTDRGRIRHHNEDNGGV. The region spanning 2-242 is the PPM-type phosphatase domain; the sequence is HAEFRTDRGR…DNITVLLVER (241 aa). Asp36, Gly37, Asp194, and Asp233 together coordinate Mn(2+).

This sequence belongs to the PP2C family. Mn(2+) is required as a cofactor.

The protein resides in the cytoplasm. Its subcellular location is the membrane. The catalysed reaction is O-phospho-L-seryl-[protein] + H2O = L-seryl-[protein] + phosphate. The enzyme catalyses O-phospho-L-threonyl-[protein] + H2O = L-threonyl-[protein] + phosphate. Protein phosphatase that dephosphorylates EF-Tu. The protein is Serine/threonine phosphatase stp (stp) of Listeria innocua serovar 6a (strain ATCC BAA-680 / CLIP 11262).